A 294-amino-acid chain; its full sequence is Elongation factor Ts (294 aa).

The involved in Mg(2+) ion dislocation from EF-Tu stretch occupies residues 82-85 (TDFV).

The protein belongs to the EF-Ts family.

It localises to the cytoplasm. Functionally, associates with the EF-Tu.GDP complex and induces the exchange of GDP to GTP. It remains bound to the aminoacyl-tRNA.EF-Tu.GTP complex up to the GTP hydrolysis stage on the ribosome. This Psychrobacter cryohalolentis (strain ATCC BAA-1226 / DSM 17306 / VKM B-2378 / K5) protein is Elongation factor Ts.